A 362-amino-acid chain; its full sequence is Uroporphyrinogen decarboxylase (362 aa).

Residues arginine 39–arginine 43, aspartate 88, tyrosine 165, threonine 220, and histidine 334 each bind substrate.

Belongs to the uroporphyrinogen decarboxylase family. In terms of assembly, homodimer.

It is found in the cytoplasm. It catalyses the reaction uroporphyrinogen III + 4 H(+) = coproporphyrinogen III + 4 CO2. It participates in porphyrin-containing compound metabolism; protoporphyrin-IX biosynthesis; coproporphyrinogen-III from 5-aminolevulinate: step 4/4. Functionally, catalyzes the decarboxylation of four acetate groups of uroporphyrinogen-III to yield coproporphyrinogen-III. The chain is Uroporphyrinogen decarboxylase from Synechococcus sp. (strain JA-3-3Ab) (Cyanobacteria bacterium Yellowstone A-Prime).